The following is a 557-amino-acid chain: Probable protein kinase UbiB (557 aa).

Residues 121-509 (SFDTVPLASA…RKLQTRVVTA (389 aa)) enclose the Protein kinase domain. Residues 127 to 135 (LASASIAQV) and Lys-154 each bind ATP. The Proton acceptor role is filled by Asp-289. Helical transmembrane passes span 506–526 (VVTAITGSGLLVVAAVLYGLH) and 535–555 (VPVWSWISGGAGSAALLVAWL).

The protein belongs to the ABC1 family. UbiB subfamily.

Its subcellular location is the cell inner membrane. It functions in the pathway cofactor biosynthesis; ubiquinone biosynthesis [regulation]. Is probably a protein kinase regulator of UbiI activity which is involved in aerobic coenzyme Q (ubiquinone) biosynthesis. In Xanthomonas axonopodis pv. citri (strain 306), this protein is Probable protein kinase UbiB.